The sequence spans 636 residues: Methyl-CpG-binding domain protein 1 (636 aa).

In terms of domain architecture, MBD spans 1–69 (MAESWQDCPA…TLFDFRQGTL (69 aa)). The interval 75 to 113 (KTHPLAVPSKKKKKPSKPAKTKKQQVGLQRSEVRIETPQ) is disordered. Basic residues predominate over residues 83 to 97 (SKKKKKPSKPAKTKK). The Nuclear localization signal signature appears at 84-88 (KKKKK). Lys117 is covalently cross-linked (Glycyl lysine isopeptide (Lys-Gly) (interchain with G-Cter in SUMO2)). 2 consecutive CXXC-type zinc fingers follow at residues 187-234 (RMFK…RRCL) and 235-281 (RIME…RRCF). Residues Cys194, Cys197, Cys200, Cys206, Cys209, Cys212, Cys228, Cys233, Cys243, Cys246, Cys249, Cys255, Cys258, Cys261, Cys275, and Cys280 each contribute to the Zn(2+) site. Residues 291–314 (GSKVASQRHSQAPPLPPHPASQYT) form a disordered region. Lys293 is covalently cross-linked (Glycyl lysine isopeptide (Lys-Gly) (interchain with G-Cter in SUMO2)). A CXXC-type 3 zinc finger spans residues 348-396 (TNQRQNRKCGACAACLRRMDCGRCDFCCDKPKFGGGNQKRQKCRWRQCL). Zn(2+)-binding residues include Cys356, Cys359, Cys362, Cys368, Cys371, Cys374, Cys390, and Cys395. The tract at residues 407–474 (AGSGSGEGAG…GRGSVLPQPD (68 aa)) is disordered. The residue at position 409 (Ser409) is a Phosphoserine. Residues Lys443 and Lys461 each participate in a glycyl lysine isopeptide (Lys-Gly) (interchain with G-Cter in SUMO2) cross-link. Residues Lys520 and Lys559 each participate in a glycyl lysine isopeptide (Lys-Gly) (interchain with G-Cter in SUMO2); alternate cross-link. The interval 543-589 (QSGFPSKAADPDLSPVKQEPPGPEEDGEEKKDDVSETTPAEEIGGVG) is disordered. Positions 550 to 612 (AADPDLSPVK…RLRDAEAWLP (63 aa)) are transcriptional repression domain (TRD).

As to quaternary structure, interacts with OASL, ATF7IP, ATF7IP2 and BAHD1. Binds CHAF1A and the SUV39H1-CBX5 complex via the MBD domain. Binds MGP via the TRD domain. May be part of the MeCP1 complex. During DNA replication, it recruits SETDB1 to form a S phase-specific complex that facilitates methylation of H3 'Lys-9' during replication-coupled chromatin assembly and is at least composed of the CAF-1 subunit CHAF1A, MBD1 and SETDB1. In terms of assembly, interacts with the Ten-1 ICD form of TENM1. Post-translationally, sumoylated, sumoylation may increase interaction with ATF7IP. Highly expressed in kidney, liver and brain. Detected at lower levels in heart, lung, skeletal muscle, spleen and testis.

The protein localises to the nucleus. It localises to the nucleus matrix. Its subcellular location is the nucleus speckle. It is found in the chromosome. Transcriptional repressor that binds CpG islands in promoters where the DNA is methylated at position 5 of cytosine within CpG dinucleotides. Binding is abolished by the presence of 7-mG that is produced by DNA damage by methylmethanesulfonate (MMS). Acts as transcriptional repressor and plays a role in gene silencing by recruiting ATF7IP, which in turn recruits factors such as the histone methyltransferase SETDB1. Probably forms a complex with SETDB1 and ATF7IP that represses transcription and couples DNA methylation and histone 'Lys-9' trimethylation. Isoform 1 can also repress transcription from unmethylated promoters. In Mus musculus (Mouse), this protein is Methyl-CpG-binding domain protein 1.